We begin with the raw amino-acid sequence, 311 residues long: Ribosomal RNA small subunit methyltransferase H (311 aa).

Residues 32 to 34 (AGH), D52, F79, D100, and Q107 each bind S-adenosyl-L-methionine.

The protein belongs to the methyltransferase superfamily. RsmH family.

It is found in the cytoplasm. The enzyme catalyses cytidine(1402) in 16S rRNA + S-adenosyl-L-methionine = N(4)-methylcytidine(1402) in 16S rRNA + S-adenosyl-L-homocysteine + H(+). Functionally, specifically methylates the N4 position of cytidine in position 1402 (C1402) of 16S rRNA. The sequence is that of Ribosomal RNA small subunit methyltransferase H from Staphylococcus aureus (strain Mu3 / ATCC 700698).